The sequence spans 436 residues: 3-ketoacyl-CoA thiolase (436 aa).

The Acyl-thioester intermediate role is filled by C99. Residues H392 and C422 each act as proton acceptor in the active site.

Belongs to the thiolase-like superfamily. Thiolase family. In terms of assembly, heterotetramer of two alpha chains (FadJ) and two beta chains (FadI).

The protein resides in the cytoplasm. The enzyme catalyses an acyl-CoA + acetyl-CoA = a 3-oxoacyl-CoA + CoA. It functions in the pathway lipid metabolism; fatty acid beta-oxidation. Catalyzes the final step of fatty acid oxidation in which acetyl-CoA is released and the CoA ester of a fatty acid two carbons shorter is formed. The protein is 3-ketoacyl-CoA thiolase of Salmonella choleraesuis (strain SC-B67).